Consider the following 293-residue polypeptide: Probable endonuclease 4 (293 aa).

His78, His118, Glu154, Asp188, His191, His225, Asp238, His240, and Glu270 together coordinate Zn(2+).

The protein belongs to the AP endonuclease 2 family. Requires Zn(2+) as cofactor.

It carries out the reaction Endonucleolytic cleavage to 5'-phosphooligonucleotide end-products.. In terms of biological role, endonuclease IV plays a role in DNA repair. It cleaves phosphodiester bonds at apurinic or apyrimidinic (AP) sites, generating a 3'-hydroxyl group and a 5'-terminal sugar phosphate. The chain is Probable endonuclease 4 from Vibrio vulnificus (strain YJ016).